The chain runs to 157 residues: Succinate dehydrogenase assembly factor 2-A, mitochondrial (157 aa).

It belongs to the SDHAF2 family. As to quaternary structure, interacts with the flavoprotein subunit within the SDH catalytic dimer.

Its subcellular location is the mitochondrion matrix. Functionally, plays an essential role in the assembly of succinate dehydrogenase (SDH), an enzyme complex (also referred to as respiratory complex II) that is a component of both the tricarboxylic acid (TCA) cycle and the mitochondrial electron transport chain, and which couples the oxidation of succinate to fumarate with the reduction of ubiquinone (coenzyme Q) to ubiquinol. Required for flavinylation (covalent attachment of FAD) of the flavoprotein subunit of the SDH catalytic dimer. The polypeptide is Succinate dehydrogenase assembly factor 2-A, mitochondrial (Drosophila willistoni (Fruit fly)).